A 310-amino-acid chain; its full sequence is D-alanine--D-alanine ligase (310 aa).

One can recognise an ATP-grasp domain in the interval 104-305 (KRLFHSEGLP…MPQLAERILQ (202 aa)). 135-190 (LGDFHGAAFVKPLDSGSSVGISRAVGKDELIRGVAKALSVSHRCMVERAIEGRELT) is a binding site for ATP. Residues Asp259, Glu272, and Asn274 each coordinate Mg(2+).

This sequence belongs to the D-alanine--D-alanine ligase family. It depends on Mg(2+) as a cofactor. Mn(2+) serves as cofactor.

It is found in the cytoplasm. The enzyme catalyses 2 D-alanine + ATP = D-alanyl-D-alanine + ADP + phosphate + H(+). Its pathway is cell wall biogenesis; peptidoglycan biosynthesis. Its function is as follows. Cell wall formation. This Magnetococcus marinus (strain ATCC BAA-1437 / JCM 17883 / MC-1) protein is D-alanine--D-alanine ligase.